Reading from the N-terminus, the 82-residue chain is Small ribosomal subunit protein uS17 (82 aa).

This sequence belongs to the universal ribosomal protein uS17 family. In terms of assembly, part of the 30S ribosomal subunit.

Functionally, one of the primary rRNA binding proteins, it binds specifically to the 5'-end of 16S ribosomal RNA. The protein is Small ribosomal subunit protein uS17 of Sulfurimonas denitrificans (strain ATCC 33889 / DSM 1251) (Thiomicrospira denitrificans (strain ATCC 33889 / DSM 1251)).